The sequence spans 510 residues: Alpha-L-arabinofuranosidase B (510 aa).

An N-terminal signal peptide occupies residues 1–24; it reads MTMSRSSRSSVLALALATGSLVAA. The interval 25–342 is catalytic; the sequence is GPCDIYSSGG…ADIVAAKYAT (318 aa). 3 cysteine pairs are disulfide-bonded: C27-C37, C87-C92, and C182-C183. The N-linked (GlcNAc...) asparagine glycan is linked to N89. Residue D225 participates in substrate binding. E227 acts as the Nucleophile in catalysis. Substrate is bound by residues N228 and G303. The Proton donor role is filled by D304. An ABD region spans residues 343-510; the sequence is TSLISGPALT…VSWVVADGFA (168 aa). Residues C412 and C450 are joined by a disulfide bond. H427, N429, F430, D446, H475, E477, L480, and D500 together coordinate substrate.

It belongs to the glycosyl hydrolase 54 family.

The protein resides in the secreted. It catalyses the reaction Hydrolysis of terminal non-reducing alpha-L-arabinofuranoside residues in alpha-L-arabinosides.. Its pathway is glycan metabolism; L-arabinan degradation. Its function is as follows. Alpha-L-arabinofuranosidase involved in the degradation of arabinoxylan, a major component of plant hemicellulose. Able to hydrolyze 1,5-, 1,3- and 1,2-alpha-linkages not only in L-arabinofuranosyl oligosaccharides, but also in polysaccharides containing terminal non-reducing L-arabinofuranoses in side chains, like L-arabinan, arabinogalactan and arabinoxylan. The sequence is that of Alpha-L-arabinofuranosidase B (abfB) from Emericella nidulans (strain FGSC A4 / ATCC 38163 / CBS 112.46 / NRRL 194 / M139) (Aspergillus nidulans).